The following is a 49-amino-acid chain: Large ribosomal subunit protein bL33B (49 aa).

This sequence belongs to the bacterial ribosomal protein bL33 family.

This chain is Large ribosomal subunit protein bL33B, found in Bacillus pumilus (strain SAFR-032).